A 327-amino-acid polypeptide reads, in one-letter code: DNA-directed RNA polymerase subunit alpha (327 aa).

Positions 1–233 are alpha N-terminal domain (alpha-NTD); it reads MQNSASEFLK…DQLSIFADLQ (233 aa). The interval 247-327 is alpha C-terminal domain (alpha-CTD); sequence VDPILLRPVD…NWPPAGLEKP (81 aa).

The protein belongs to the RNA polymerase alpha chain family. As to quaternary structure, homodimer. The RNAP catalytic core consists of 2 alpha, 1 beta, 1 beta' and 1 omega subunit. When a sigma factor is associated with the core the holoenzyme is formed, which can initiate transcription.

It carries out the reaction RNA(n) + a ribonucleoside 5'-triphosphate = RNA(n+1) + diphosphate. DNA-dependent RNA polymerase catalyzes the transcription of DNA into RNA using the four ribonucleoside triphosphates as substrates. The chain is DNA-directed RNA polymerase subunit alpha from Laribacter hongkongensis (strain HLHK9).